Consider the following 137-residue polypeptide: Large ribosomal subunit protein uL16 (137 aa).

The protein belongs to the universal ribosomal protein uL16 family. Part of the 50S ribosomal subunit.

Its function is as follows. Binds 23S rRNA and is also seen to make contacts with the A and possibly P site tRNAs. In Streptococcus sanguinis (strain SK36), this protein is Large ribosomal subunit protein uL16.